Reading from the N-terminus, the 153-residue chain is ORM1-like protein 2 (153 aa).

Residues 1–21 (MNVGVAHSEVNPNTRVMNSRG) are Cytoplasmic-facing. A run of 2 helical transmembrane segments spans residues 22-42 (IWLA…SIPF) and 43-63 (FSIP…MYIF). Residues 64-105 (LHTVKGTPFETPDQGKARLLTHWEQMDYGLQFTSSRKFLSIS) lie on the Cytoplasmic side of the membrane. A helical membrane pass occupies residues 106 to 126 (PIVLYLLASFYTKYDAAHFLI). Residues 127–153 (NTASLLSVLLPKLPQFHGVRLFGINKY) lie on the Extracellular side of the membrane.

This sequence belongs to the ORM family. As to quaternary structure, ceramide-sensitive subunit of the serine palmitoyltransferase (SPT) complex, which is also composed of SPTLC1, SPTLC2/3 and SPTSSA/B.

It localises to the endoplasmic reticulum membrane. Its function is as follows. Plays an essential role in the homeostatic regulation of sphingolipid de novo biosynthesis by modulating the activity of the serine palmitoyltransferase (SPT) in response to ceramide levels. When complexed to SPT, the binding of ceramides to its N-terminus stabilizes a conformation that block SPT substrate entry, hence preventing SPT catalytic activity. Through this mechanism, maintains ceramide levels at sufficient concentrations for the production of complex sphingolipids, but which prevents the accumulation of ceramides to levels that trigger apoptosis. The polypeptide is ORM1-like protein 2 (Ormdl2) (Mus musculus (Mouse)).